Here is a 129-residue protein sequence, read N- to C-terminus: KVFSKCELAHKLKAQEMDGFGGYSLANWVCMAEYESNFNTRAFNGKNANGSSDYGLFQLNNKWWCKDNKRSSSNACNIMCSKLLDENIDDDISCAKRVVRDPKGMSAWKAWVKHCKDKDLSEYLASCNL.

In terms of domain architecture, C-type lysozyme spans 1 to 129; the sequence is KVFSKCELAH…LSEYLASCNL (129 aa). Disulfide bonds link Cys-6/Cys-127, Cys-30/Cys-115, Cys-65/Cys-80, and Cys-76/Cys-94. Active-site residues include Glu-35 and Asp-53. 5 residues coordinate Ca(2+): Lys-82, Asp-85, Asn-87, Asp-90, and Asp-91.

The protein belongs to the glycosyl hydrolase 22 family. As to quaternary structure, monomer. The cofactor is Ca(2+).

The catalysed reaction is Hydrolysis of (1-&gt;4)-beta-linkages between N-acetylmuramic acid and N-acetyl-D-glucosamine residues in a peptidoglycan and between N-acetyl-D-glucosamine residues in chitodextrins.. Functionally, lysozymes have primarily a bacteriolytic function; those in tissues and body fluids are associated with the monocyte-macrophage system and enhance the activity of immunoagents. This Equus caballus (Horse) protein is Lysozyme C, milk isozyme (LYZ).